The following is a 283-amino-acid chain: Pantothenate synthetase (283 aa).

Residue M31–H38 coordinates ATP. H38 acts as the Proton donor in catalysis. Residue Q62 participates in (R)-pantoate binding. Q62 lines the beta-alanine pocket. G148–D151 is an ATP binding site. Q154 contributes to the (R)-pantoate binding site. ATP is bound by residues V177 and K185–R188.

Belongs to the pantothenate synthetase family. As to quaternary structure, homodimer.

The protein localises to the cytoplasm. It catalyses the reaction (R)-pantoate + beta-alanine + ATP = (R)-pantothenate + AMP + diphosphate + H(+). It participates in cofactor biosynthesis; (R)-pantothenate biosynthesis; (R)-pantothenate from (R)-pantoate and beta-alanine: step 1/1. In terms of biological role, catalyzes the condensation of pantoate with beta-alanine in an ATP-dependent reaction via a pantoyl-adenylate intermediate. The polypeptide is Pantothenate synthetase (Staphylococcus aureus (strain MSSA476)).